Reading from the N-terminus, the 305-residue chain is Protoheme IX farnesyltransferase (305 aa).

The next 9 membrane-spanning stretches (helical) occupy residues 31–51 (VISL…YSVH), 52–72 (PFIA…AGAI), 96–118 (VIES…FFMA), 123–145 (LLAS…IWLK), 151–171 (NIVI…AAVS), 179–199 (IILF…LALF), 225–245 (ILIY…IGMN), 247–267 (FIYL…AGSL), and 281–301 (FAYS…TNTI).

Belongs to the UbiA prenyltransferase family. Protoheme IX farnesyltransferase subfamily.

Its subcellular location is the cell inner membrane. The enzyme catalyses heme b + (2E,6E)-farnesyl diphosphate + H2O = Fe(II)-heme o + diphosphate. Its pathway is porphyrin-containing compound metabolism; heme O biosynthesis; heme O from protoheme: step 1/1. Its function is as follows. Converts heme B (protoheme IX) to heme O by substitution of the vinyl group on carbon 2 of heme B porphyrin ring with a hydroxyethyl farnesyl side group. This chain is Protoheme IX farnesyltransferase, found in Rickettsia massiliae (strain Mtu5).